We begin with the raw amino-acid sequence, 362 residues long: MTTPLTLENISQAPKALLHDHLDGGLRPSTVLELAGQYGYDDLPADDVDELATFFRTAAHSGSLVRYLEPFAHTVGVMQTAEALHRVAFECVEDLAGDNVVYAEVRFAPELHIEGGMGLDAVVDAVLAGFADGEKAAASAGRTITVRCLVTAMRHAARSREIAELAIRFRDRGVVGFDIAGAEAGYPPTRHLDAFEYMRGNNARFTIHAGEAFGLPSIHEAIAFCGADRLGHGVRIVDDITVAPDGQVKLGRLAAILRDKRIPLELCPSSNVQTGAVASIAEHPFDLLARTRFRVTVNTDNRLMSDTSMSQEMLRLVEAFGYGWSDLARFTINAMKSSFIPFDERLALIDDVIKPRYAVLAG.

Zn(2+) contacts are provided by His19 and His21. Residues His21, Asp23, and Gly181 each contribute to the substrate site. His208 is a Zn(2+) binding site. Glu211 functions as the Proton donor in the catalytic mechanism. Asp300 lines the Zn(2+) pocket.

This sequence belongs to the metallo-dependent hydrolases superfamily. Adenosine and AMP deaminases family. Adenosine deaminase subfamily. It depends on Zn(2+) as a cofactor.

The catalysed reaction is adenosine + H2O + H(+) = inosine + NH4(+). It catalyses the reaction 2'-deoxyadenosine + H2O + H(+) = 2'-deoxyinosine + NH4(+). Its function is as follows. Catalyzes the hydrolytic deamination of adenosine and 2-deoxyadenosine. This Mycobacterium sp. (strain MCS) protein is Adenosine deaminase.